Consider the following 242-residue polypeptide: Ethanolamine ammonia-lyase small subunit (242 aa).

2 residues coordinate adenosylcob(III)alamin: valine 155 and glutamate 176.

It belongs to the EutC family. The basic unit is a heterodimer which dimerizes to form tetramers. The heterotetramers trimerize; 6 large subunits form a core ring with 6 small subunits projecting outwards. Adenosylcob(III)alamin serves as cofactor.

The protein resides in the bacterial microcompartment. The enzyme catalyses ethanolamine = acetaldehyde + NH4(+). Its pathway is amine and polyamine degradation; ethanolamine degradation. Its function is as follows. Catalyzes the deamination of various vicinal amino-alcohols to oxo compounds. Allows this organism to utilize ethanolamine as the sole source of nitrogen and carbon in the presence of external vitamin B12. In Clostridium acetobutylicum (strain ATCC 824 / DSM 792 / JCM 1419 / IAM 19013 / LMG 5710 / NBRC 13948 / NRRL B-527 / VKM B-1787 / 2291 / W), this protein is Ethanolamine ammonia-lyase small subunit.